A 430-amino-acid chain; its full sequence is uncharacterized protein (430 aa).

It localises to the cytoplasm. The protein localises to the nucleus. This is an uncharacterized protein from Schizosaccharomyces pombe (strain 972 / ATCC 24843) (Fission yeast).